A 949-amino-acid chain; its full sequence is MAM domain-containing glycosylphosphatidylinositol anchor protein 1 (949 aa).

Positions 1-18 (MEMICVLFLSLVPAYSRG) are cleaved as a signal peptide. 2 Ig-like domains span residues 24 to 125 (PAQA…IRVD) and 132 to 230 (PVLT…KSIT). Residues Asn-42 and Asn-90 are each glycosylated (N-linked (GlcNAc...) asparagine). Disulfide bonds link Cys-60–Cys-108 and Cys-157–Cys-214. 6 N-linked (GlcNAc...) asparagine glycosylation sites follow: Asn-235, Asn-247, Asn-257, Asn-292, Asn-307, and Asn-331. The Ig-like 3 domain maps to 240 to 323 (PALKLSVNET…VGNPAKKTVN (84 aa)). Cys-262 and Cys-308 are joined by a disulfide. 3 Ig-like domains span residues 338–432 (PDVI…VEVN), 440–531 (PTIS…ALVQ), and 537–625 (PPVV…FQVS). Residues Cys-357 and Cys-415 are joined by a disulfide bond. N-linked (GlcNAc...) asparagine glycosylation occurs at Asn-432. 2 disulfides stabilise this stretch: Cys-463/Cys-513 and Cys-559/Cys-609. N-linked (GlcNAc...) asparagine glycans are attached at residues Asn-577, Asn-649, and Asn-820. The Fibronectin type-III domain maps to 637 to 737 (TPNPTLSQKQ…ARIIRYMEPI (101 aa)). The MAM domain occupies 745-912 (NTCRFEDEKI…VTLKKGDCPR (168 aa)). Ser-926 carries GPI-anchor amidated serine lipidation. Residues 927-949 (GVSAQHGPCLCGPLTFFLYVLLR) constitute a propeptide, removed in mature form.

In terms of assembly, interacts heterophilically through its MAM domain with proteins in axon-rich regions and through its Ig-like domains with proteins in differentiating muscle. In the embryonic brachial spinal cord, selectively expressed by medial lateral motor column neurons, some populations of dorsal root ganglion neurons, and interneurons.

The protein resides in the cell membrane. Functionally, required for radial migration of cortical neurons in the superficial layer of the neocortex. The polypeptide is MAM domain-containing glycosylphosphatidylinositol anchor protein 1 (Gallus gallus (Chicken)).